The following is a 98-amino-acid chain: NADH-ubiquinone oxidoreductase chain 4L (98 aa).

A run of 3 helical transmembrane segments spans residues 2–22 (PSIS…MLMF), 29–49 (SLLC…LIIL), and 61–81 (ILLL…LVMI).

It belongs to the complex I subunit 4L family. As to quaternary structure, core subunit of respiratory chain NADH dehydrogenase (Complex I) which is composed of 45 different subunits.

The protein resides in the mitochondrion inner membrane. The catalysed reaction is a ubiquinone + NADH + 5 H(+)(in) = a ubiquinol + NAD(+) + 4 H(+)(out). Functionally, core subunit of the mitochondrial membrane respiratory chain NADH dehydrogenase (Complex I) which catalyzes electron transfer from NADH through the respiratory chain, using ubiquinone as an electron acceptor. Part of the enzyme membrane arm which is embedded in the lipid bilayer and involved in proton translocation. This is NADH-ubiquinone oxidoreductase chain 4L (MT-ND4L) from Mirza coquereli (Coquerel's giant mouse lemur).